Reading from the N-terminus, the 310-residue chain is Isoflavone reductase homolog A622-like (310 aa).

Residues 13-19 (GGTGYIG), Arg-38, and Lys-47 contribute to the NADP(+) site. Residue Lys-135 is the Proton acceptor of the active site. Arg-139 serves as a coordination point for NADP(+).

It belongs to the NmrA-type oxidoreductase family. Isoflavone reductase subfamily. In terms of assembly, monomer. As to expression, expressed in roots.

The protein resides in the cytoplasm. The protein operates within alkaloid biosynthesis; nicotine biosynthesis. Involved in the biosynthesis of pyridine alkaloid natural products, leading mainly to the production of anabasine, anatabine, nicotine and nornicotine, effective deterrents against herbivores with antiparasitic and pesticide properties (neurotoxins); nornicotine serves as the precursor in the synthesis of the carcinogen compound N'-nitrosonornicotine (NNN). Reductase that may be involved in a late step of tobacco alkaloid biosynthesis. Maybe involved in either the formation of a nicotinic acid-derived precursor or the final condensation reaction of tobacco alkaloids. This Nicotiana tabacum (Common tobacco) protein is Isoflavone reductase homolog A622-like.